A 480-amino-acid chain; its full sequence is MKLEPLFDLDPNVTVRTRFAPSPTGYLHVGGARTALYSWLFAKHHHGEFVLRIEDTDLERSTPEATAAIIEGMEWLNLAWEHGPYFQTKRFTRYNQVIDQMIEQGLAYRCYCTKERLEELRHSQEANKEKPRYDRHCLHDHSHSPDEPHVVRFKNPQEGSVIFDDAVRGRIEISNSELDDLIIRRTDGSPTYNFCVVVDDWDMGITHVVRGEDHINNTPRQINILNALGAPIPTYAHVSMINGDDGQKLSKRHGAVSVMQYRDDGYLPEALVNYLVRLGWGHGDQEIFSREEMINLFELEHVSKSASAFNTEKLQWLNQHYMRELPADYVANHLAWQYRDLGIDTANGPALTDIVSMLAERSKTLREMALSSRYFFEEFETFDETAAKKHLKAAAVQPLEKVKEKLTALSVWDAHSTHEAIEQTAADLDVGMGKVGMPLRVAVTGAGQSPSMDVTLAAIGRERVLARIDKAIAFIKAKAA.

Residues 21–31 carry the 'HIGH' region motif; sequence PSPTGYLHVGG. Residues Cys110, Cys112, Cys137, and His139 each coordinate Zn(2+). A 'KMSKS' region motif is present at residues 248–252; that stretch reads KLSKR. Lys251 provides a ligand contact to ATP.

This sequence belongs to the class-I aminoacyl-tRNA synthetase family. Glutamate--tRNA ligase type 1 subfamily. In terms of assembly, monomer. Zn(2+) is required as a cofactor.

The protein localises to the cytoplasm. It carries out the reaction tRNA(Glu) + L-glutamate + ATP = L-glutamyl-tRNA(Glu) + AMP + diphosphate. Functionally, catalyzes the attachment of glutamate to tRNA(Glu) in a two-step reaction: glutamate is first activated by ATP to form Glu-AMP and then transferred to the acceptor end of tRNA(Glu). The chain is Glutamate--tRNA ligase from Actinobacillus succinogenes (strain ATCC 55618 / DSM 22257 / CCUG 43843 / 130Z).